A 309-amino-acid polypeptide reads, in one-letter code: Calponin-2 (309 aa).

Ser-2 is modified (N-acetylserine). N6-acetyllysine is present on residues Lys-8 and Lys-25. In terms of domain architecture, Calponin-homology (CH) spans 28–132 (PQKEAELRTW…SLLALAGKAK (105 aa)). Ser-138 is modified (phosphoserine). 3 Calponin-like repeats span residues 166 to 191 (IGLQMGTNKCASQSGMTAYGTRRHLY), 206 to 231 (ISLQMGTNKCASQVGMTAPGTRRHIY), and 245 to 269 (MSLQMGYTQGANQSGQVFGLGRQIY). The disordered stretch occupies residues 283–309 (APSGTGDCPDPGEVPEYPPYYQEEAGY).

The protein belongs to the calponin family. Heart and smooth muscle.

In terms of biological role, thin filament-associated protein that is implicated in the regulation and modulation of smooth muscle contraction. It is capable of binding to actin, calmodulin and tropomyosin. The interaction of calponin with actin inhibits the actomyosin Mg-ATPase activity. This chain is Calponin-2 (CNN2), found in Homo sapiens (Human).